Here is a 138-residue protein sequence, read N- to C-terminus: Basic phospholipase A2 vaspin B chain (138 aa).

Residues 1–16 (MRILWIVAVCLIGVEG) form the signal peptide. Disulfide bonds link Cys42-Cys131, Cys44-Cys60, Cys59-Cys111, Cys65-Cys138, Cys66-Cys104, Cys73-Cys97, and Cys91-Cys102. The Ca(2+) site is built by Tyr43, Gly45, and Gly47. The active site involves His63. Asp64 lines the Ca(2+) pocket. Residue Asp105 is part of the active site.

It belongs to the phospholipase A2 family. Group II subfamily. D49 sub-subfamily. As to quaternary structure, heterodimer of a weakly toxic basic protein having phospholipase A2 activity (B chain (AC Q8JFG1)) and a non-toxic acidic protein functioning as its inhibitor (A chain). Ca(2+) serves as cofactor. In terms of tissue distribution, expressed by the venom gland.

It localises to the secreted. The enzyme catalyses a 1,2-diacyl-sn-glycero-3-phosphocholine + H2O = a 1-acyl-sn-glycero-3-phosphocholine + a fatty acid + H(+). Heterodimer: postsynaptic neurotoxin. In terms of biological role, monomer: snake venom phospholipase A2 (PLA2) that shows postsynaptic neurotoxicity. PLA2 catalyzes the calcium-dependent hydrolysis of the 2-acyl groups in 3-sn-phosphoglycerides. The sequence is that of Basic phospholipase A2 vaspin B chain from Vipera aspis aspis (Aspic viper).